A 363-amino-acid chain; its full sequence is NAD(P)H-quinone oxidoreductase subunit 1, chloroplastic (363 aa).

Transmembrane regions (helical) follow at residues 30-50, 104-124, 127-147, 253-273, 300-320, and 343-363; these read LVPILTLVLAITIGVLVIVWL, IAVISIILSYSVIPFSYHLVL, LGIGVFLWIAVSSIAPIGLLM, FGLFYVASYLNLLVSSLFVTV, VFGTTMGMFITLAKTYLFLFI, and FLLPISLGNLLLTTSFQLLSL.

Belongs to the complex I subunit 1 family. NDH is composed of at least 16 different subunits, 5 of which are encoded in the nucleus.

It is found in the plastid. It localises to the chloroplast thylakoid membrane. The enzyme catalyses a plastoquinone + NADH + (n+1) H(+)(in) = a plastoquinol + NAD(+) + n H(+)(out). It catalyses the reaction a plastoquinone + NADPH + (n+1) H(+)(in) = a plastoquinol + NADP(+) + n H(+)(out). In terms of biological role, NDH shuttles electrons from NAD(P)H:plastoquinone, via FMN and iron-sulfur (Fe-S) centers, to quinones in the photosynthetic chain and possibly in a chloroplast respiratory chain. The immediate electron acceptor for the enzyme in this species is believed to be plastoquinone. Couples the redox reaction to proton translocation, and thus conserves the redox energy in a proton gradient. This is NAD(P)H-quinone oxidoreductase subunit 1, chloroplastic from Piper cenocladum (Ant piper).